The sequence spans 161 residues: Cyclic pyranopterin monophosphate synthase (161 aa).

Residues 75–77 and 113–114 each bind substrate; these read LCH and ME. Residue Asp128 is part of the active site.

It belongs to the MoaC family. In terms of assembly, homohexamer; trimer of dimers.

The enzyme catalyses (8S)-3',8-cyclo-7,8-dihydroguanosine 5'-triphosphate = cyclic pyranopterin phosphate + diphosphate. Its pathway is cofactor biosynthesis; molybdopterin biosynthesis. In terms of biological role, catalyzes the conversion of (8S)-3',8-cyclo-7,8-dihydroguanosine 5'-triphosphate to cyclic pyranopterin monophosphate (cPMP). This chain is Cyclic pyranopterin monophosphate synthase, found in Escherichia coli O9:H4 (strain HS).